We begin with the raw amino-acid sequence, 266 residues long: Small ribosomal subunit protein uS3 (266 aa).

The KH type-2 domain maps to 39 to 107; it reads VREYLKKKLK…PVHVNIEEIR (69 aa). A disordered region spans residues 214 to 266; that stretch reads PVVEEVTEDKRPRRNARPGDRRPRRDGEGGAPGARRGGPRRGAGKPEDGKTGE. Basic and acidic residues-rich tracts occupy residues 230 to 241 and 257 to 266; these read RPGDRRPRRDGE and GKPEDGKTGE.

The protein belongs to the universal ribosomal protein uS3 family. In terms of assembly, part of the 30S ribosomal subunit. Forms a tight complex with proteins S10 and S14.

Binds the lower part of the 30S subunit head. Binds mRNA in the 70S ribosome, positioning it for translation. The polypeptide is Small ribosomal subunit protein uS3 (Burkholderia mallei (strain NCTC 10247)).